We begin with the raw amino-acid sequence, 125 residues long: Desulfoferrodoxin homolog (125 aa).

Fe cation-binding residues include Cys10, Cys13, Cys29, Cys30, His49, His69, His75, Cys116, and His119.

Belongs to the desulfoferrodoxin family. It depends on Fe(3+) as a cofactor. The cofactor is Cu(2+).

This chain is Desulfoferrodoxin homolog, found in Archaeoglobus fulgidus (strain ATCC 49558 / DSM 4304 / JCM 9628 / NBRC 100126 / VC-16).